Reading from the N-terminus, the 486-residue chain is Cardiolipin synthase A (486 aa).

2 consecutive transmembrane segments (helical) span residues 3 to 23 and 38 to 58; these read TFYT…IAGV and MAWL…YLSV. PLD phosphodiesterase domains are found at residues 219–246 and 399–426; these read MDLR…VDPR and EGGL…DMRS. Active-site residues include histidine 224, lysine 226, aspartate 231, histidine 404, lysine 406, and aspartate 411.

This sequence belongs to the phospholipase D family. Cardiolipin synthase subfamily. ClsA sub-subfamily.

It is found in the cell inner membrane. The catalysed reaction is 2 a 1,2-diacyl-sn-glycero-3-phospho-(1'-sn-glycerol) = a cardiolipin + glycerol. In terms of biological role, catalyzes the reversible phosphatidyl group transfer from one phosphatidylglycerol molecule to another to form cardiolipin (CL) (diphosphatidylglycerol) and glycerol. The chain is Cardiolipin synthase A from Salmonella gallinarum (strain 287/91 / NCTC 13346).